The sequence spans 123 residues: ATP synthase epsilon chain (123 aa).

Belongs to the ATPase epsilon chain family. In terms of assembly, F-type ATPases have 2 components, CF(1) - the catalytic core - and CF(0) - the membrane proton channel. CF(1) has five subunits: alpha(3), beta(3), gamma(1), delta(1), epsilon(1). CF(0) has three main subunits: a, b and c.

The protein resides in the cell inner membrane. Produces ATP from ADP in the presence of a proton gradient across the membrane. The protein is ATP synthase epsilon chain of Helicobacter pylori (strain G27).